Consider the following 471-residue polypeptide: ATP synthase subunit beta (471 aa).

156-163 (GGAGVGKT) contacts ATP.

The protein belongs to the ATPase alpha/beta chains family. In terms of assembly, F-type ATPases have 2 components, CF(1) - the catalytic core - and CF(0) - the membrane proton channel. CF(1) has five subunits: alpha(3), beta(3), gamma(1), delta(1), epsilon(1). CF(0) has three main subunits: a(1), b(2) and c(9-12). The alpha and beta chains form an alternating ring which encloses part of the gamma chain. CF(1) is attached to CF(0) by a central stalk formed by the gamma and epsilon chains, while a peripheral stalk is formed by the delta and b chains.

The protein resides in the cell membrane. The catalysed reaction is ATP + H2O + 4 H(+)(in) = ADP + phosphate + 5 H(+)(out). Its function is as follows. Produces ATP from ADP in the presence of a proton gradient across the membrane. The catalytic sites are hosted primarily by the beta subunits. This chain is ATP synthase subunit beta, found in Macrococcus caseolyticus (strain JCSC5402) (Macrococcoides caseolyticum).